Here is a 727-residue protein sequence, read N- to C-terminus: NADH-ubiquinone oxidoreductase 75 kDa subunit, mitochondrial (727 aa).

A mitochondrion-targeting transit peptide spans 1-23; it reads MLRIPVRKALVGLSKSPKGCVRT. Positions 30–108 constitute a 2Fe-2S ferredoxin-type domain; it reads NLIEVFVDGQ…GWNILTNSEK (79 aa). [2Fe-2S] cluster is bound by residues C64, C75, and C78. Position 84 is an N6-acetyllysine (K84). C92 provides a ligand contact to [2Fe-2S] cluster. The region spanning 108–147 is the 4Fe-4S His(Cys)3-ligated-type domain; that stretch reads KSKKAREGVMEFLLANHPLDCPICDQGGECDLQDQSMMFG. Positions 124, 128, 131, 137, 176, 179, 182, and 226 each coordinate [4Fe-4S] cluster. Positions 245-301 constitute a 4Fe-4S Mo/W bis-MGD-type domain; the sequence is TRKTESIDVMDAVGSNIVVSTRTGEVMRILPRMHEDINEXWISDKTRFAYDGLKRQR. An N6-acetyllysine mark is found at K467, K499, and K709.

The protein belongs to the complex I 75 kDa subunit family. Core subunit of respiratory chain NADH dehydrogenase (Complex I) which is composed of 45 different subunits. This is the largest subunit of complex I and it is a component of the iron-sulfur (IP) fragment of the enzyme. Complex I associates with ubiquinol-cytochrome reductase complex (Complex III) to form supercomplexes. Interacts with MDM2 and AKAP1. [2Fe-2S] cluster serves as cofactor. Requires [4Fe-4S] cluster as cofactor.

The protein resides in the mitochondrion inner membrane. It catalyses the reaction a ubiquinone + NADH + 5 H(+)(in) = a ubiquinol + NAD(+) + 4 H(+)(out). Its function is as follows. Core subunit of the mitochondrial membrane respiratory chain NADH dehydrogenase (Complex I) which catalyzes electron transfer from NADH through the respiratory chain, using ubiquinone as an electron acceptor. Essential for catalysing the entry and efficient transfer of electrons within complex I. Plays a key role in the assembly and stability of complex I and participates in the association of complex I with ubiquinol-cytochrome reductase complex (Complex III) to form supercomplexes. In Gorilla gorilla gorilla (Western lowland gorilla), this protein is NADH-ubiquinone oxidoreductase 75 kDa subunit, mitochondrial (NDUFS1).